The sequence spans 525 residues: Signal recognition particle protein (525 aa).

Residues 107 to 114 (GLQGSGKT), 196 to 200 (DTAGR), and 254 to 257 (TKLD) each bind GTP. The tract at residues 437–525 (GMGIPGIGRK…LSKLKFPGKK (89 aa)) is disordered. The segment covering 447 to 467 (SATRKSKGAKGKSGKKSKKGT) has biased composition (basic residues). The segment covering 480–497 (GVPGMPGLAGLPGGLPDL) has biased composition (low complexity).

Belongs to the GTP-binding SRP family. SRP54 subfamily. Part of the signal recognition particle protein translocation system, which is composed of SRP and FtsY.

The protein resides in the cytoplasm. The catalysed reaction is GTP + H2O = GDP + phosphate + H(+). Its function is as follows. Involved in targeting and insertion of nascent membrane proteins into the cytoplasmic membrane. Binds to the hydrophobic signal sequence of the ribosome-nascent chain (RNC) as it emerges from the ribosomes. The SRP-RNC complex is then targeted to the cytoplasmic membrane where it interacts with the SRP receptor FtsY. This chain is Signal recognition particle protein, found in Mycobacterium bovis (strain ATCC BAA-935 / AF2122/97).